We begin with the raw amino-acid sequence, 275 residues long: Ribosomal protein L11 methyltransferase (275 aa).

The S-adenosyl-L-methionine site is built by T123, G146, D167, and N208.

The protein belongs to the methyltransferase superfamily. PrmA family.

Its subcellular location is the cytoplasm. It carries out the reaction L-lysyl-[protein] + 3 S-adenosyl-L-methionine = N(6),N(6),N(6)-trimethyl-L-lysyl-[protein] + 3 S-adenosyl-L-homocysteine + 3 H(+). Its function is as follows. Methylates ribosomal protein L11. The chain is Ribosomal protein L11 methyltransferase from Campylobacter fetus subsp. fetus (strain 82-40).